The primary structure comprises 161 residues: Putative sporulation sigma factor-processing peptidase (161 aa).

Residue Asp-38 is part of the active site.

The protein belongs to the peptidase U4 family.

In terms of biological role, probably activates the RNA polymerase sigma-35 factor at the stage II of sporulation. This chain is Putative sporulation sigma factor-processing peptidase, found in Bacillus thuringiensis subsp. kurstaki.